Reading from the N-terminus, the 416-residue chain is Gamma-glutamyl phosphate reductase (416 aa).

Belongs to the gamma-glutamyl phosphate reductase family.

It is found in the cytoplasm. It carries out the reaction L-glutamate 5-semialdehyde + phosphate + NADP(+) = L-glutamyl 5-phosphate + NADPH + H(+). It participates in amino-acid biosynthesis; L-proline biosynthesis; L-glutamate 5-semialdehyde from L-glutamate: step 2/2. In terms of biological role, catalyzes the NADPH-dependent reduction of L-glutamate 5-phosphate into L-glutamate 5-semialdehyde and phosphate. The product spontaneously undergoes cyclization to form 1-pyrroline-5-carboxylate. The chain is Gamma-glutamyl phosphate reductase from Streptococcus pyogenes serotype M4 (strain MGAS10750).